Here is a 485-residue protein sequence, read N- to C-terminus: MAPTFTNSNGQPIPEPFATQRVGQHGPLLLQDFNLIDSLAHFDRERIPERVVHAKGSGAYGVFEVTDDITDICAAKFLDTVGKKTRIFTRFSTVGGELGSADTARDPRGFATKFYTEEGNLDLVYNNTPVFFIRDPSKFPHFIHTQKRNPETHLKDANMFWDYLTSNEESIHQVMVLFSDRGTPASYREMNGYSGHTYKWSNKKGEWFYVQVHFISDQGIKTLTNEEAGALAGSNPDYAQEDLFKNIAAGNYPSWTAYIQTMTEAEAKEAEFSVFDLTKVWPHKKYPLRRFGKFTLNENPKNYFAEVEQAAFSPAHTVPYMEPSADPVLQSRLFSYADTHRHRLGTNYTQIPVNCPVTGAVFNPHMRDGAMTVNGNLGSHPNYLASDKPVEFKQFSLQEDQEVWNGAATPFHWKATPADFKQAQELWKVLKRYPNQQEHLAHNIAVHAAGADAAIQDRVFAYFGKVSQDLADAIKKEVLELSPRK.

Residues His53 and Asn126 contribute to the active site. Residue Tyr336 participates in heme binding.

This sequence belongs to the catalase family. In terms of assembly, homotetramer. It depends on heme as a cofactor.

It localises to the peroxisome matrix. The catalysed reaction is 2 H2O2 = O2 + 2 H2O. Its function is as follows. Catalyzes the degradation of hydrogen peroxide (H(2)O(2)) generated by peroxisomal oxidases to water and oxygen, thereby protecting cells from the toxic effects of hydrogen peroxide. In Candida albicans (strain SC5314 / ATCC MYA-2876) (Yeast), this protein is Peroxisomal catalase (CAT1).